The following is a 328-amino-acid chain: Dihydroorotate dehydrogenase (quinone), mitochondrial (328 aa).

A helical transmembrane segment spans residues 21-38 (AHGLSIAGLKTGLVTGSA). Residues 61–65 (AGYDK) and threonine 85 each bind FMN. Residue lysine 65 coordinates substrate. Substrate is bound at residue 110–114 (NRLGF). The FMN site is built by asparagine 139 and asparagine 170. 170-175 (NISSPN) is a binding site for substrate. Serine 173 serves as the catalytic Nucleophile. Lysine 215 and serine 243 together coordinate FMN. Position 244–245 (244–245 (NT)) interacts with substrate. Positions 266 and 295 each coordinate FMN.

The protein belongs to the dihydroorotate dehydrogenase family. Type 2 subfamily. Requires FMN as cofactor.

The protein resides in the mitochondrion inner membrane. It carries out the reaction (S)-dihydroorotate + a quinone = orotate + a quinol. It participates in pyrimidine metabolism; UMP biosynthesis via de novo pathway; orotate from (S)-dihydroorotate (quinone route): step 1/1. Catalyzes the conversion of dihydroorotate to orotate with quinone as electron acceptor. This chain is Dihydroorotate dehydrogenase (quinone), mitochondrial (URA1), found in Cyclocybe aegerita (Black poplar mushroom).